We begin with the raw amino-acid sequence, 2042 residues long: Cell adhesion molecule DSCAML1 (2042 aa).

Positions 1-17 (MWLVTFFLLYSLRKAHT) are cleaved as a signal peptide. Residues 18–1592 (EDVGTSLYFV…AQGEGDDVKK (1575 aa)) are Extracellular-facing. N-linked (GlcNAc...) asparagine glycans are attached at residues Asn-28 and Asn-78. Ig-like C2-type domains are found at residues 37–107 (SSTV…AENS), 114–216 (PNIR…ARLS), 227–311 (PTML…GTLT), 315–403 (PLRV…SIIT), 409–502 (PRIV…ARIN), 507–587 (PSIR…LSIS), 597–686 (PPLI…RQLI), 691–785 (PRFV…MFLT), and 789–886 (PAMI…LTVQ). 5 disulfides stabilise this stretch: Cys-46-Cys-102, Cys-145-Cys-197, Cys-248-Cys-295, Cys-337-Cys-387, and Cys-430-Cys-486. N-linked (GlcNAc...) asparagine glycans are attached at residues Asn-369, Asn-472, Asn-514, Asn-557, Asn-667, Asn-711, Asn-750, Asn-797, and Asn-810. Intrachain disulfides connect Cys-527/Cys-576 and Cys-618/Cys-670. Cys-712 and Cys-768 are disulfide-bonded. Cysteines 811 and 868 form a disulfide. Fibronectin type-III domains lie at 888 to 985 (PPDP…TEEA), 990 to 1089 (PPMD…TLED), 1094 to 1190 (PPEN…TKED), and 1194 to 1289 (PPAG…AGKA). 6 N-linked (GlcNAc...) asparagine glycosylation sites follow: Asn-927, Asn-1083, Asn-1145, Asn-1163, Asn-1276, and Asn-1346. In terms of domain architecture, Ig-like C2-type 10 spans 1279–1368 (EKVTIEPAGK…SGYYTCTATN (90 aa)). The cysteines at positions 1312 and 1364 are disulfide-linked. Fibronectin type-III domains lie at 1384-1478 (PPDQ…THGR) and 1479-1579 (EPSF…TIPP). 3 N-linked (GlcNAc...) asparagine glycosylation sites follow: Asn-1493, Asn-1532, and Asn-1562. Residues 1593–1613 (LFTIACPIILATLGVALLFII) traverse the membrane as a helical segment. The Cytoplasmic segment spans residues 1614–2042 (RKKRKEKRLK…GAYSKSYTLV (429 aa)). Disordered stretches follow at residues 1716-1742 (PLID…HSTR), 1781-1805 (SDSY…TESA), 1841-1865 (SSDQ…PSEP), and 1940-2042 (PPAR…YTLV). Basic residues predominate over residues 1733–1742 (KSVKSAHSTR). Polar residues-rich tracts occupy residues 1781-1790 (SDSYSASLSQ) and 1841-1863 (SSDQ…STPS). The segment covering 1951–1960 (AKPPGLPPPS) has biased composition (pro residues). Positions 1961 to 1983 (SSSSSTTLPQRTLPMPTAASTAP) are enriched in low complexity. The span at 1984 to 1995 (APAPAPAAPAEP) shows a compositional bias: pro residues. Composition is skewed to low complexity over residues 1996–2005 (PANTTTTTTT) and 2023–2034 (GAGRAQKQGAGA).

In terms of assembly, homodimer; mediates homophilic interactions to promote cell adhesion. SDK1, SDK2, DSCAM and DSCAML1 are expressed in non-overlapping subsets of interneurons and retinal ganglion cells (RGCs) that form synapses in distinct inner plexiform layer (IPL) sublaminae.

Its subcellular location is the cell membrane. The protein resides in the synapse. Its function is as follows. Cell adhesion molecule that plays a role in neuronal self-avoidance. Promotes repulsion between specific neuronal processes of either the same cell or the same subtype of cells. Adhesion molecule that promotes lamina-specific synaptic connections in the retina: expressed in specific subsets of interneurons and retinal ganglion cells (RGCs) and promotes synaptic connectivity via homophilic interactions. The polypeptide is Cell adhesion molecule DSCAML1 (DSCAML1) (Gallus gallus (Chicken)).